Here is a 356-residue protein sequence, read N- to C-terminus: Dual-specificity RNA methyltransferase RlmN (356 aa).

E89 acts as the Proton acceptor in catalysis. The 234-residue stretch at 108-341 (SHARYTICVS…CTIRESKGLD (234 aa)) folds into the Radical SAM core domain. C115 and C346 are joined by a disulfide. C122, C126, and C129 together coordinate [4Fe-4S] cluster. Residues 172 to 173 (GE), S204, 227 to 229 (SLH), and N303 contribute to the S-adenosyl-L-methionine site. Residue C346 is the S-methylcysteine intermediate of the active site.

The protein belongs to the radical SAM superfamily. RlmN family. Requires [4Fe-4S] cluster as cofactor.

It localises to the cytoplasm. The enzyme catalyses adenosine(2503) in 23S rRNA + 2 reduced [2Fe-2S]-[ferredoxin] + 2 S-adenosyl-L-methionine = 2-methyladenosine(2503) in 23S rRNA + 5'-deoxyadenosine + L-methionine + 2 oxidized [2Fe-2S]-[ferredoxin] + S-adenosyl-L-homocysteine. It catalyses the reaction adenosine(37) in tRNA + 2 reduced [2Fe-2S]-[ferredoxin] + 2 S-adenosyl-L-methionine = 2-methyladenosine(37) in tRNA + 5'-deoxyadenosine + L-methionine + 2 oxidized [2Fe-2S]-[ferredoxin] + S-adenosyl-L-homocysteine. Functionally, specifically methylates position 2 of adenine 2503 in 23S rRNA and position 2 of adenine 37 in tRNAs. m2A2503 modification seems to play a crucial role in the proofreading step occurring at the peptidyl transferase center and thus would serve to optimize ribosomal fidelity. The protein is Dual-specificity RNA methyltransferase RlmN of Campylobacter jejuni subsp. jejuni serotype O:2 (strain ATCC 700819 / NCTC 11168).